Here is a 288-residue protein sequence, read N- to C-terminus: MAGREKVTVRDIVRAKQRGERIVMVTAYDYITAKLVDEAGVDMILVGDSLGMVVLGLPSTHQVTLEDMERHTAAVARAQPRALIVADMPFMSYEASTRDAVLNAGRLIAAGADAVKIEGGASYSDTIRALVRAGIPVVAHVGLTPQRYKLLGGYRLAGKTASEAMEVIREAIGAEEAGAFAVVIEFTAWEVAREITRKLSIPTICIGSGPYCDGQVLVIHDLLGLTPTPPPFAKKYVDLAAIIRRAVSEYASDVRNGRFPGEGMYWGMKRGEYEKLQRLINEQAGSGD.

The Mg(2+) site is built by D48 and D87. Residues 48–49 (DS), D87, and K116 contribute to the 3-methyl-2-oxobutanoate site. E118 contacts Mg(2+). The Proton acceptor role is filled by E185.

This sequence belongs to the PanB family. In terms of assembly, homodecamer; pentamer of dimers. Mg(2+) is required as a cofactor.

Its subcellular location is the cytoplasm. The catalysed reaction is 3-methyl-2-oxobutanoate + (6R)-5,10-methylene-5,6,7,8-tetrahydrofolate + H2O = 2-dehydropantoate + (6S)-5,6,7,8-tetrahydrofolate. It functions in the pathway cofactor biosynthesis; coenzyme A biosynthesis. Catalyzes the reversible reaction in which hydroxymethyl group from 5,10-methylenetetrahydrofolate is transferred onto alpha-ketoisovalerate to form ketopantoate. The chain is 3-methyl-2-oxobutanoate hydroxymethyltransferase from Hyperthermus butylicus (strain DSM 5456 / JCM 9403 / PLM1-5).